We begin with the raw amino-acid sequence, 480 residues long: Glycogen synthase (480 aa).

Residue lysine 15 coordinates ADP-alpha-D-glucose.

Belongs to the glycosyltransferase 1 family. Bacterial/plant glycogen synthase subfamily.

The enzyme catalyses [(1-&gt;4)-alpha-D-glucosyl](n) + ADP-alpha-D-glucose = [(1-&gt;4)-alpha-D-glucosyl](n+1) + ADP + H(+). The protein operates within glycan biosynthesis; glycogen biosynthesis. In terms of biological role, synthesizes alpha-1,4-glucan chains using ADP-glucose. In Rhizobium leguminosarum bv. trifolii (strain WSM2304), this protein is Glycogen synthase.